Consider the following 808-residue polypeptide: Probable phosphoketolase 1 (808 aa).

Belongs to the XFP family. The cofactor is thiamine diphosphate.

In Nostoc sp. (strain PCC 7120 / SAG 25.82 / UTEX 2576), this protein is Probable phosphoketolase 1.